Consider the following 257-residue polypeptide: Transmembrane protein C257L (257 aa).

2 consecutive transmembrane segments (helical) span residues 123–143 (LELL…FTAL) and 163–183 (MMIF…YVLV).

This sequence belongs to the asfivirus C257R family.

It localises to the host membrane. The protein localises to the virion. This African swine fever virus (isolate Tick/South Africa/Pretoriuskop Pr4/1996) (ASFV) protein is Transmembrane protein C257L.